Here is a 34-residue protein sequence, read N- to C-terminus: U4-theraphotoxin-Hs1a (34 aa).

3 disulfide bridges follow: cysteine 3-cysteine 17, cysteine 10-cysteine 22, and cysteine 16-cysteine 33.

This sequence belongs to the neurotoxin 14 (magi-1) family. 05 (ICK-7) subfamily. In terms of tissue distribution, expressed by the venom gland.

Its subcellular location is the secreted. In terms of biological role, intracisternal injection paralyzes mice. In Cyriopagopus schmidti (Chinese bird spider), this protein is U4-theraphotoxin-Hs1a.